The following is a 357-amino-acid chain: Major outer membrane protein P.IB (357 aa).

Positions 1-19 (MKKSLIALTLAALPVAAMA) are cleaved as a signal peptide.

It belongs to the Gram-negative porin family. Homotrimer.

It is found in the cell outer membrane. In terms of biological role, serves as a slightly cation selective porin. This is Major outer membrane protein P.IB (por) from Neisseria sicca.